The sequence spans 577 residues: Laccase-25 (577 aa).

Residues 1 to 22 form the signal peptide; that stretch reads MTLHWSLLLFIAIALVSSVAQA. 2 consecutive Plastocyanin-like domains span residues 30–147 and 158–313; these read NVGN…PRGG and KEHV…YAGA. N-linked (GlcNAc...) asparagine glycosylation occurs at N33. Cu cation is bound by residues H81 and H83. N-linked (GlcNAc...) asparagine glycosylation occurs at N109. Residues H126 and H128 each contribute to the Cu cation site. Residues N169, N203, N208, N218, N332, N383, N396, N404, N441, and N459 are each glycosylated (N-linked (GlcNAc...) asparagine). Positions 423–560 constitute a Plastocyanin-like 3 domain; the sequence is DFPDTPPVVF…AMVLEVLDGP (138 aa). Positions 477, 480, 482, 539, 540, 541, and 545 each coordinate Cu cation.

The protein belongs to the multicopper oxidase family. Requires Cu cation as cofactor.

The protein resides in the secreted. Its subcellular location is the extracellular space. It localises to the apoplast. The catalysed reaction is 4 hydroquinone + O2 = 4 benzosemiquinone + 2 H2O. Functionally, lignin degradation and detoxification of lignin-derived products. The sequence is that of Laccase-25 (LAC25) from Oryza sativa subsp. japonica (Rice).